A 1343-amino-acid polypeptide reads, in one-letter code: ABC multidrug transporter atrD (1343 aa).

Residues 1-10 are compositionally biased toward polar residues; it reads MSPLETNPLS. The interval 1-67 is disordered; that stretch reads MSPLETNPLS…HRPKSSSSNN (67 aa). Residues 20-31 show a composition bias toward low complexity; sequence ETSTTEEQASTP. A glycan (N-linked (GlcNAc...) asparagine) is linked at Asn-99. The next 4 membrane-spanning stretches (helical) occupy residues 114–134, 163–183, 235–255, and 263–283; these read ILIMVISTICAIAAGAALPLF, YFVYLGIGEFVTVYVSTVGFI, KVGLTLTALATFVTAFIIAYV, and ICSSTIVALVLTMGGGSQFII. Residues 115 to 403 form the ABC transmembrane type-1 1 domain; it reads LIMVISTICA…VSPNAQAFTN (289 aa). Asn-309 carries an N-linked (GlcNAc...) asparagine glycan. The next 2 membrane-spanning stretches (helical) occupy residues 339–359 and 366–386; these read IVMGFMIGAMFGLMYSNYGLG and FLVDGAVDVGDILTVLMAILI. Residues 438–683 form the ABC transporter 1 domain; that stretch reads IELRNVKHIY…GGAYRKLVEA (246 aa). Position 473 to 480 (473 to 480) interacts with ATP; the sequence is GPSGSGKS. N-linked (GlcNAc...) asparagine glycosylation is present at Asn-545. 2 helical membrane passes run 773-793 and 820-840; these read MLIGLVFSVLAGGGQPTQAVL and LMFFVVGIIQFITQSTNGAAF. The 290-residue stretch at 774–1063 folds into the ABC transmembrane type-1 2 domain; that stretch reads LIGLVFSVLA…VFSFAPDMGK (290 aa). Asn-872 is a glycosylation site (N-linked (GlcNAc...) asparagine). Transmembrane regions (helical) follow at residues 887-907, 920-942, 1010-1030, and 1037-1057; these read HLSGVSGVTLGTILMTSTTLG, LALVCISVVPVLLACGFYRFYML, ALVFFCVALGFWYGGTLLGHH, and FFVCFSEILFGAQSAGTVFSF. A glycan (N-linked (GlcNAc...) asparagine) is linked at Asn-1083. One can recognise an ABC transporter 2 domain in the interval 1098 to 1336; the sequence is IEFRNVHFRY…KGRYYELVNL (239 aa). 1133-1140 serves as a coordination point for ATP; the sequence is GPSGCGKS.

This sequence belongs to the ABC transporter superfamily. ABCB family. Multidrug resistance exporter (TC 3.A.1.201) subfamily.

The protein localises to the cell membrane. Fenamirol efflux transporter activity is inhibited by the cyclosporin derivative PSC 833, nigericin, reserpine and valinomycin. The effect of reserpine is transiant, while that of the cyclosporin derivative PSC 833, nigericin and valinomycin is proportional to the time of exposure. Cyclohexinmide has inhibitory effect only when applied prior to addition of the fungicide. Pleiotropic ABC efflux transporter involved in the protection of the cells against a wide range of toxic compounds. Confers resistance to the azole fenarimol via efflux transport. May also be involved in the secretion of penicillin. This is ABC multidrug transporter atrD from Emericella nidulans (strain FGSC A4 / ATCC 38163 / CBS 112.46 / NRRL 194 / M139) (Aspergillus nidulans).